The following is a 437-amino-acid chain: Phosphoribosylamine--glycine ligase (437 aa).

Positions 110-322 constitute an ATP-grasp domain; the sequence is KNLLRSADIP…LVEVMQAVVD (213 aa). An ATP-binding site is contributed by 142–203; it reads EPTDPVNVVV…EERLTGPEVS (62 aa). Mg(2+) is bound by residues glutamate 292 and asparagine 294.

Belongs to the GARS family. The cofactor is Mg(2+). Mn(2+) is required as a cofactor.

It carries out the reaction 5-phospho-beta-D-ribosylamine + glycine + ATP = N(1)-(5-phospho-beta-D-ribosyl)glycinamide + ADP + phosphate + H(+). It participates in purine metabolism; IMP biosynthesis via de novo pathway; N(1)-(5-phospho-D-ribosyl)glycinamide from 5-phospho-alpha-D-ribose 1-diphosphate: step 2/2. In Rhodopirellula baltica (strain DSM 10527 / NCIMB 13988 / SH1), this protein is Phosphoribosylamine--glycine ligase.